A 396-amino-acid polypeptide reads, in one-letter code: Chorismate synthase (396 aa).

Arg41 and Arg47 together coordinate NADP(+). Residues 130–132 (RAS), Gly298, 313–317 (KPIPT), and Arg339 each bind FMN.

Belongs to the chorismate synthase family. As to quaternary structure, homotetramer. It depends on FMNH2 as a cofactor.

It catalyses the reaction 5-O-(1-carboxyvinyl)-3-phosphoshikimate = chorismate + phosphate. Its pathway is metabolic intermediate biosynthesis; chorismate biosynthesis; chorismate from D-erythrose 4-phosphate and phosphoenolpyruvate: step 7/7. Catalyzes the anti-1,4-elimination of the C-3 phosphate and the C-6 proR hydrogen from 5-enolpyruvylshikimate-3-phosphate (EPSP) to yield chorismate, which is the branch point compound that serves as the starting substrate for the three terminal pathways of aromatic amino acid biosynthesis. This reaction introduces a second double bond into the aromatic ring system. In Syntrophomonas wolfei subsp. wolfei (strain DSM 2245B / Goettingen), this protein is Chorismate synthase.